Consider the following 232-residue polypeptide: Large ribosomal subunit protein uL1 (232 aa).

This sequence belongs to the universal ribosomal protein uL1 family. In terms of assembly, part of the 50S ribosomal subunit.

In terms of biological role, binds directly to 23S rRNA. The L1 stalk is quite mobile in the ribosome, and is involved in E site tRNA release. Protein L1 is also a translational repressor protein, it controls the translation of the L11 operon by binding to its mRNA. The protein is Large ribosomal subunit protein uL1 of Bacillus licheniformis (strain ATCC 14580 / DSM 13 / JCM 2505 / CCUG 7422 / NBRC 12200 / NCIMB 9375 / NCTC 10341 / NRRL NRS-1264 / Gibson 46).